The following is a 3305-amino-acid chain: Microtubule-actin cross-linking factor 1, isoforms 6/7 (3305 aa).

7 disordered regions span residues 1 to 24 (MGKP…GEDE), 108 to 140 (VQKS…MPPN), 152 to 202 (LSEV…KSVD), 239 to 272 (AAAS…GFSE), 333 to 381 (EEWE…VAVS), 941 to 1007 (EPAI…PEWS), and 2865 to 2896 (SVEP…MPIL). Basic and acidic residues predominate over residues 120 to 129 (PNAERKDNVN). 2 consecutive EF-hand domains span residues 2958 to 2993 (HKKS…SKFP) and 2994 to 3029 (TTKL…NKDA). Asp-2971, Asp-2973, Asp-2975, Lys-2977, Glu-2982, Asp-3007, Asp-3009, Asp-3011, Tyr-3013, and Glu-3018 together coordinate Ca(2+). The GAR domain occupies 3034–3106 (TDADKIEDEV…EFLVKNDPCR (73 aa)). The disordered stretch occupies residues 3122–3305 (PEGASQGMTP…ASPRTPGPKR (184 aa)). Residues 3142 to 3176 (SSRAASPTRSSSSASQSNHSCTSMPSSPATPASGT) are compositionally biased toward low complexity. Residues 3193–3212 (FHSSRTSLAGDTSNSSSPAS) are compositionally biased toward polar residues. The segment covering 3227–3241 (SRPGSRAGSRAGSRA) has biased composition (low complexity). A compositionally biased stretch (polar residues) spans 3256 to 3266 (ETQSACSDTSE). Low complexity predominate over residues 3267 to 3278 (SSAAGGQGSSRR).

The protein resides in the cytoplasm. It is found in the cytoskeleton. The chain is Microtubule-actin cross-linking factor 1, isoforms 6/7 from Mus musculus (Mouse).